The following is an 896-amino-acid chain: FHIP family protein C05D11.8 (896 aa).

Residues 823 to 865 (STASSPRTSDDHDPTLFYGRSTMAPPGRKPLLREPSRQETLDD) form a disordered region. Residues 853–865 (LLREPSRQETLDD) are compositionally biased toward basic and acidic residues.

Belongs to the FHIP family.

This chain is FHIP family protein C05D11.8, found in Caenorhabditis elegans.